The following is a 156-amino-acid chain: Small ribosomal subunit protein uS7 (156 aa).

This sequence belongs to the universal ribosomal protein uS7 family. Part of the 30S ribosomal subunit. Contacts proteins S9 and S11.

One of the primary rRNA binding proteins, it binds directly to 16S rRNA where it nucleates assembly of the head domain of the 30S subunit. Is located at the subunit interface close to the decoding center, probably blocks exit of the E-site tRNA. In Desulfatibacillum aliphaticivorans, this protein is Small ribosomal subunit protein uS7.